Here is a 335-residue protein sequence, read N- to C-terminus: Nucleoid-associated protein PC1_1634 (335 aa).

Belongs to the YejK family.

The protein localises to the cytoplasm. It is found in the nucleoid. The sequence is that of Nucleoid-associated protein PC1_1634 from Pectobacterium carotovorum subsp. carotovorum (strain PC1).